The sequence spans 239 residues: Sugar fermentation stimulation protein homolog (239 aa).

The protein belongs to the SfsA family.

This Synechococcus sp. (strain JA-3-3Ab) (Cyanobacteria bacterium Yellowstone A-Prime) protein is Sugar fermentation stimulation protein homolog.